The following is a 267-amino-acid chain: NAD kinase (267 aa).

Residue aspartate 45 is the Proton acceptor of the active site. NAD(+) is bound by residues 45–46, 122–123, arginine 148, aspartate 150, 161–166, alanine 185, and glutamine 223; these read DG, NE, and TAYNKS.

Belongs to the NAD kinase family. A divalent metal cation serves as cofactor.

The protein resides in the cytoplasm. It carries out the reaction NAD(+) + ATP = ADP + NADP(+) + H(+). Involved in the regulation of the intracellular balance of NAD and NADP, and is a key enzyme in the biosynthesis of NADP. Catalyzes specifically the phosphorylation on 2'-hydroxyl of the adenosine moiety of NAD to yield NADP. This chain is NAD kinase, found in Levilactobacillus brevis (strain ATCC 367 / BCRC 12310 / CIP 105137 / JCM 1170 / LMG 11437 / NCIMB 947 / NCTC 947) (Lactobacillus brevis).